The primary structure comprises 212 residues: Leucine efflux protein (212 aa).

A run of 6 helical transmembrane segments spans residues 12–32 (TYLV…LFVL), 49–69 (GVFI…ATLI), 71–91 (TTPI…LYLG), 122–142 (ILSL…VQFI), 153–173 (FFIL…FLII), and 188–208 (LAKV…ARLA).

This sequence belongs to the Rht family.

The protein resides in the cell inner membrane. It carries out the reaction L-leucine(in) + H(+)(out) = L-leucine(out) + H(+)(in). Functionally, exporter of leucine. The polypeptide is Leucine efflux protein (leuE) (Shigella sonnei (strain Ss046)).